A 220-amino-acid chain; its full sequence is Probable metallo-hydrolase YybB (220 aa).

Residues His67, His69, Asp71, His72, His139, Asp158, and His200 each coordinate Zn(2+).

The protein belongs to the metallo-beta-lactamase superfamily. Zn(2+) is required as a cofactor.

This Bacillus subtilis (strain 168) protein is Probable metallo-hydrolase YybB (yybB).